A 410-amino-acid polypeptide reads, in one-letter code: FBD-associated F-box protein At5g38590 (410 aa).

One can recognise an F-box domain in the interval 1-47 (MDKINGLPDDLLVKILSYVPTDIAVSTSILSKRWEFLWMWLPNLDYT). One can recognise an FBD domain in the interval 335–385 (GWNQPSSVPECLLSSLQIFKWPQYLGRPEDRDIAVYILKNARHLKKTTILA).

This chain is FBD-associated F-box protein At5g38590, found in Arabidopsis thaliana (Mouse-ear cress).